We begin with the raw amino-acid sequence, 273 residues long: 29 kDa ribonucleoprotein A, chloroplastic (273 aa).

The N-terminal 58 residues, M1–K58, are a transit peptide targeting the chloroplast. Residues L87–P165 enclose the RRM 1 domain. The segment at R156–G181 is disordered. A linker (Gly-rich) region spans residues P166–S187. The 79-residue stretch at N188 to A266 folds into the RRM 2 domain.

It is found in the plastid. The protein localises to the chloroplast. In terms of biological role, could be involved in splicing and/or processing of chloroplast RNA's. The protein is 29 kDa ribonucleoprotein A, chloroplastic of Nicotiana sylvestris (Wood tobacco).